The following is a 564-amino-acid chain: Cytochrome c oxidase subunit 1 (564 aa).

The disordered stretch occupies residues M1–A23. 7 helical membrane passes run M43–I63, L83–F103, L122–L142, F171–I191, I214–G234, L259–V279, and F292–W312. A Fe(II)-heme a-binding site is contributed by H87. Cu cation contacts are provided by H265 and Y269. The segment at residues H265 to Y269 is a cross-link (1'-histidyl-3'-tyrosine (His-Tyr)). Cu cation-binding residues include H314 and H315. 2 consecutive transmembrane segments (helical) span residues M316–V336 and M360–L380. H398 lines the heme a3 pocket. A run of 3 helical transmembrane segments spans residues F399–F419, I434–G454, and I477–F497. H400 serves as a coordination point for Fe(II)-heme a.

It belongs to the heme-copper respiratory oxidase family. As to quaternary structure, associates with subunits II, III and IV to form cytochrome c oxidase. Requires Cu(2+) as cofactor. It depends on heme as a cofactor.

It localises to the cell membrane. It catalyses the reaction 4 Fe(II)-[cytochrome c] + O2 + 8 H(+)(in) = 4 Fe(III)-[cytochrome c] + 2 H2O + 4 H(+)(out). The protein operates within energy metabolism; oxidative phosphorylation. Functionally, cytochrome c oxidase is the component of the respiratory chain that catalyzes the reduction of oxygen to water. Subunits 1-3 form the functional core of the enzyme complex. CO I is the catalytic subunit of the enzyme. Electrons originating in cytochrome c are transferred via the copper A center of subunit 2 and heme A of subunit 1 to the bimetallic center formed by heme A3 and copper B. This Corynebacterium diphtheriae (strain ATCC 700971 / NCTC 13129 / Biotype gravis) protein is Cytochrome c oxidase subunit 1 (ctaD).